Reading from the N-terminus, the 40-residue chain is Photosystem II reaction center protein T (40 aa).

Residues 3 to 23 (ALVYTFLLVGTLGIIFFAIFF) traverse the membrane as a helical segment.

This sequence belongs to the PsbT family. In terms of assembly, PSII is composed of 1 copy each of membrane proteins PsbA, PsbB, PsbC, PsbD, PsbE, PsbF, PsbH, PsbI, PsbJ, PsbK, PsbL, PsbM, PsbT, PsbY, PsbZ, Psb30/Ycf12, at least 3 peripheral proteins of the oxygen-evolving complex and a large number of cofactors. It forms dimeric complexes.

Its subcellular location is the plastid. It localises to the chloroplast thylakoid membrane. Functionally, found at the monomer-monomer interface of the photosystem II (PS II) dimer, plays a role in assembly and dimerization of PSII. PSII is a light-driven water plastoquinone oxidoreductase, using light energy to abstract electrons from H(2)O, generating a proton gradient subsequently used for ATP formation. The sequence is that of Photosystem II reaction center protein T from Anthoceros angustus (Hornwort).